The chain runs to 784 residues: Ribosome biogenesis protein BOP1 homolog (784 aa).

Over residues 1–11 (MTKKLALKRKG) the composition is skewed to basic residues. Residues 1–159 (MTKKLALKRK…DSDTSDEEDI (159 aa)) are disordered. 4 stretches are compositionally biased toward acidic residues: residues 27-36 (SENEEEEEDL), 45-54 (EDSTDDEGID), 62-73 (SEELQFESDEEG), and 84-111 (AEEDEESSDEDDDEEEGSSDEEGEEDEE). A compositionally biased stretch (basic and acidic residues) spans 112–123 (KDSKSKQADDKP). Low complexity predominate over residues 124-133 (SSSGAASKKA). Positions 138-148 (LSKRDTSKPEY) are enriched in basic and acidic residues. Residues 149–158 (QDSDTSDEED) are compositionally biased toward acidic residues. 7 WD repeats span residues 445–486 (GHTD…RTIE), 488–526 (DEVVRCVAWCPNPKLSIIAVATGNRLLLVNPKVGDKVLV), 570–612 (THFK…SQIP), 615–653 (KSKGLIQFVLFHPVKPCFFVATQHNIRIYDLVKQELVKK), 656–695 (TNSKWISGMSIHPKGDNLLVSTYDKKMLWFDLDLSTKPYQ), 699–738 (LHRNAVRSVAFHLRYPLFASGSDDQAVIVSHGMVYNDLLQ), and 754–784 (RDEFGVLDVNWHPVQPWIFSTGADSTIRLYT).

This sequence belongs to the WD repeat BOP1/ERB1 family.

The protein resides in the nucleus. It localises to the nucleolus. Its subcellular location is the nucleoplasm. Required for maturation of ribosomal RNAs and formation of the large ribosomal subunit. The sequence is that of Ribosome biogenesis protein BOP1 homolog from Drosophila yakuba (Fruit fly).